A 281-amino-acid chain; its full sequence is MASFIASDQDVKNFLTAPSMNDQEGIGFAYATDEAVLKALIPAPLKLMAPVVCGYVVHMGKPTFSAPYLEESLFALVSYKDKMMGAYPINLLLHGPGAESGVIAGREGAGIPKKLADDIELRRNDNSATATVERHGKTLLNVSWTAGELNDPSIMKQFAGQLALGKEAEMNSFFYKYDIDQHEDGTNHFSNVQLVATQLRSLADQVEPGNLSIQLESTDDDPFGELKVLKPLGAAWFHFDTSVMFNTLKLDEVDAATTMPKLLTGRYDRSFFNPKAATYII.

Belongs to the ADC family.

Its subcellular location is the cytoplasm. It catalyses the reaction 10-oxo-(12Z)-octadecenoate = 10-oxo-(11E)-octadecenoate. It participates in lipid metabolism; fatty acid metabolism. Its function is as follows. Is involved in a saturation metabolic pathway of polyunsaturated fatty acids, that detoxifies unsaturated fatty acids and generates hydroxy fatty acids, oxo fatty acids, conjugated fatty acids such as conjugated linoleic acids (CLAs), and partially saturated trans-fatty acids as intermediates. CLA-DC catalyzes the migration of the carbon-carbon double bond in 10-oxo-(12Z)-octadecenoate to produce 10-oxo-(11E)-octadecenoate, during linoleate metabolism. As part of the gut microbiome, this enzyme modifies host fatty acid composition and is expected to improve human health by altering lipid metabolism related to the onset of metabolic syndrome. This chain is CLA biosynthesis isomerase, found in Lactiplantibacillus plantarum (Lactobacillus plantarum).